The primary structure comprises 354 residues: GTPase Obg (354 aa).

The Obg domain occupies 1–159 (MKYIDEAIIH…ADLKLELKVL (159 aa)). An OBG-type G domain is found at 160–334 (ADVGLLGMPN…LTYAIMEFLE (175 aa)). GTP is bound by residues 166–173 (GMPNAGKS), 191–195 (FTTMH), 213–216 (DIPG), 284–287 (NKVD), and 315–317 (SAM). Residues serine 173 and threonine 193 each contribute to the Mg(2+) site.

It belongs to the TRAFAC class OBG-HflX-like GTPase superfamily. OBG GTPase family. In terms of assembly, monomer. Mg(2+) serves as cofactor.

The protein localises to the cytoplasm. Functionally, an essential GTPase which binds GTP, GDP and possibly (p)ppGpp with moderate affinity, with high nucleotide exchange rates and a fairly low GTP hydrolysis rate. Plays a role in control of the cell cycle, stress response, ribosome biogenesis and in those bacteria that undergo differentiation, in morphogenesis control. This is GTPase Obg from Nitrosospira multiformis (strain ATCC 25196 / NCIMB 11849 / C 71).